The chain runs to 113 residues: Dynein light chain Tctex-type 1 (113 aa).

M1 is modified (N-acetylmethionine). The tract at residues 41 to 113 (QWTTNVVEQT…CIVSAFGLSI (73 aa)) is interaction with GNB1.

Belongs to the dynein light chain Tctex-type family. In terms of assembly, homodimer. The cytoplasmic dynein 1 complex consists of two catalytic heavy chains (HCs) and a number of non-catalytic subunits presented by intermediate chains (ICs), light intermediate chains (LICs) and light chains (LCs); the composition seems to vary in respect to the IC, LIC and LC composition. The heavy chain homodimer serves as a scaffold for the probable homodimeric assembly of the respective non-catalytic subunits. The ICs and LICs bind directly to the HC dimer and dynein LCs assemble on the IC dimer. DYNLT1 and DYNLT3 compete for association with dynein IC (DYNC1I1 or DYNC1I2). Self-associates. Interacts with RHO. Interacts with DYNC1I1 and DYNC1I2. Interacts with DOC2A, DOC2B and SCN10A. Interacts with PVR. Interacts with SVIL isoform 2. Interacts with GNB1; the interaction occurs in presence of guanine nucleotide-binding protein G(T) subunit gamma; the interaction diminishes the association of DYNLT1 with dynein IC (DYNC1I1 or DYNC1I2). Interacts with GNB2, GNB3 and GNB5; the interactions occur in presence of guanine nucleotide-binding protein G(T) subunit gamma. Interacts with ACVR2B and ARHGEF2. Interacts with DNAI4. Interacts with CFAP61. Post-translationally, phosphorylated by BMPR2. The phosphorylation status is proposed to regulate the association with the cytoplasmic dynein complex and may have role in cytoplasmic dynein cargo release.

It is found in the golgi apparatus. The protein resides in the cytoplasm. It localises to the cytoskeleton. Its subcellular location is the spindle. Acts as one of several non-catalytic accessory components of the cytoplasmic dynein 1 complex that are thought to be involved in linking dynein to cargos and to adapter proteins that regulate dynein function. Cytoplasmic dynein 1 acts as a motor for the intracellular retrograde motility of vesicles and organelles along microtubules. Binds to transport cargos and is involved in apical cargo transport such as rhodopsin-bearing vesicles in polarized epithelia. Is involved in intracellular targeting of D-type retrovirus gag polyproteins to the cytoplasmic assembly site. May also be a accessory component of axonemal dynein. Functionally, plays a role in neuronal morphogenesis; the function is independent of cytoplasmic dynein and seems to be coupled to regulation of the actin cytoskeleton by enhancing Rac1 activity. Required for neurite outgrowth. The function in neurogenesis may be regulated by association with a G-protein beta-gamma dimer. May function as a receptor-independent activator of heterotrimeric G-protein signaling; the activation appears to be independent of a nucleotide exchange. Plays a role in regulating neurogenesis; inhibits the genesis of neurons from precursor cells during cortical development presumably by antagonizing ARHGEF2. Unrelated to the role in retrograde microtubule-associated movement may play a role in the dimerization of cytoplasmic proteins/domains such as for ACVR2B. Binds to the cytoplasmic domain of ACVR2B and, in vitro, inhibits ACVR2B signaling. Involved in the regulation of mitotic spindle orientation. In Rattus norvegicus (Rat), this protein is Dynein light chain Tctex-type 1 (Dynlt1).